The primary structure comprises 301 residues: MLELNGVPVDDTYCEAFDGIYSRIIVTAKHKWLLKKAAYSATALPSTVFGEAEGGVEKWLSPQETPDGRLGAICQIWVQKSKKFLDVLMREMGKRIRQGILVVPTTRVFNATESETKFDAEINVGRCGDGYEWEDEMWGRKVIRVPIMFGEFIIERYIGYAEGIAGGNIWYFCESEEAALEAGEAAVEALKQLDGVITSFDICSAGSKPETKYPEMGPSTNHYFCPTLKGKIPDSKVPDGVKSIPEIVINGIKREVVEKAMFVCMDVVSKIDGVVRISAGNYEGKLGQHKIYLKDLIEKYS.

It belongs to the FTR family.

This is Formylmethanofuran--tetrahydromethanopterin formyltransferase-like protein from Archaeoglobus fulgidus (strain ATCC 49558 / DSM 4304 / JCM 9628 / NBRC 100126 / VC-16).